A 176-amino-acid chain; its full sequence is Small ribosomal subunit protein uS5 (176 aa).

Residues 18–81 (FEEKMLFVNR…SIARKNMISV (64 aa)) enclose the S5 DRBM domain.

Belongs to the universal ribosomal protein uS5 family. As to quaternary structure, part of the 30S ribosomal subunit. Contacts proteins S4 and S8.

Its function is as follows. With S4 and S12 plays an important role in translational accuracy. Functionally, located at the back of the 30S subunit body where it stabilizes the conformation of the head with respect to the body. The sequence is that of Small ribosomal subunit protein uS5 from Deinococcus deserti (strain DSM 17065 / CIP 109153 / LMG 22923 / VCD115).